Here is an 865-residue protein sequence, read N- to C-terminus: MATLSSLRHLIQTHPLIDNHAHNLLSQSAACKYAKYPFEQIISEAQGVALANAPSTLSFHRAASQLATLYQSSSSDWDSVRAARDQSVQRDYEGLIRKCLEGTQVLLLDDLLTENDVELFDWHDRFTASATKRIVRIEALAASVLSQIVHGGPVPQDSSDLSAFQTLWESFSRNFSALVSDAIADPAVVGFKSVICYRTGLDVQPTDDRDTERLIRSFARTISQAAVSTPRVEDKPLNDWLVRQTLNLLKAAKVTQPNKPLQLHTGLGDNDINLLKSNPAHLQSLIAQYPEVDFVLLHSSYPYTREAGYLACVYPNVYLDLGEVFPMVSRDAQESILRESLEIVPSTRLLWSTDGHFFPETFWLANRQFRDALEKVFVDYVQNGDYTIEQAMQAAADILFHNSNRLYELNEQPPSAALSSGHQTVSRISSTDLLEKFIRSNPGVKYVWTQFIDYTATVRVRMFPVMEFAKIVRKQRRLGISMATFWMLQDDEVVGGSTTGQFYLIPDLSTLSPNVGIDSKSATVMTWWKSEQGESLEECPRTNLLNINNKLKDEFGIQATCGFEIEVVFLKPTTDPSTGEEDWAPSVTNHSWSQMTRETRRMLPLLEEIAETLASIGIHLQQFHAESAPGQFEFILPPDNPVAAVDTLIKSRQVIANIVEKHGLRATLYPRPYPSAAGTASHAHVSISPSTKEESFLAGVLQHYPAVLAFTLSGDASYDRVKSGIWAGSEWVTWGTQNREAPIRKISPGHWEIKSLDGLANMYLAMAAFLAAGYTGVKENLPLTIKDCPYDAASLPESERAALGITTKLPNTLAKSLAALESDEILRSLLGENLVEDYIIVKRAESKKLSAMDEKARRKWLVERY.

The GS beta-grasp domain maps to Pro442 to Gly533. The region spanning Pro540–Tyr865 is the GS catalytic domain.

It belongs to the glutamine synthetase family.

It is found in the cytoplasm. Functionally, may function as a GSI-related enzyme in synthesizing a small diffusible factor that acts as an extracellular signal directing asexual sporulation and perhaps other aspects of colony growth. May be involved in brlA activation (an early transcriptional regulator for conidiation specific gene). The polypeptide is Protein fluG (fluG) (Emericella nidulans (strain FGSC A4 / ATCC 38163 / CBS 112.46 / NRRL 194 / M139) (Aspergillus nidulans)).